A 136-amino-acid polypeptide reads, in one-letter code: Transcription antitermination protein NusB (136 aa).

Belongs to the NusB family.

Involved in transcription antitermination. Required for transcription of ribosomal RNA (rRNA) genes. Binds specifically to the boxA antiterminator sequence of the ribosomal RNA (rrn) operons. This is Transcription antitermination protein NusB from Salinispora tropica (strain ATCC BAA-916 / DSM 44818 / JCM 13857 / NBRC 105044 / CNB-440).